The chain runs to 685 residues: Hemocyanin subunit X (685 aa).

Residues Met-1 to Ala-20 form the signal peptide. His-210, His-214, and His-243 together coordinate Cu cation. The N-linked (GlcNAc...) asparagine glycan is linked to Asn-329. 3 residues coordinate Cu cation: His-367, His-371, and His-407. A disulfide bond links Cys-577 and Cys-625.

The protein belongs to the tyrosinase family. Hemocyanin subfamily.

Its subcellular location is the secreted. It localises to the extracellular space. Functionally, hemocyanins are copper-containing oxygen carriers occurring freely dissolved in the hemolymph of many mollusks and arthropods. The protein is Hemocyanin subunit X (HCX) of Scutigera coleoptrata (House centipede).